The sequence spans 503 residues: ATP synthase subunit alpha (503 aa).

Residue 170 to 177 (GDRQTGKT) participates in ATP binding.

Belongs to the ATPase alpha/beta chains family. F-type ATPases have 2 components, CF(1) - the catalytic core - and CF(0) - the membrane proton channel. CF(1) has five subunits: alpha(3), beta(3), gamma(1), delta(1), epsilon(1). CF(0) has three main subunits: a(1), b(2) and c(9-12). The alpha and beta chains form an alternating ring which encloses part of the gamma chain. CF(1) is attached to CF(0) by a central stalk formed by the gamma and epsilon chains, while a peripheral stalk is formed by the delta and b chains.

The protein resides in the cell inner membrane. The catalysed reaction is ATP + H2O + 4 H(+)(in) = ADP + phosphate + 5 H(+)(out). Its function is as follows. Produces ATP from ADP in the presence of a proton gradient across the membrane. The alpha chain is a regulatory subunit. This chain is ATP synthase subunit alpha, found in Geobacter sulfurreducens (strain ATCC 51573 / DSM 12127 / PCA).